The following is a 420-amino-acid chain: ATP phosphoribosyltransferase regulatory subunit (420 aa).

Belongs to the class-II aminoacyl-tRNA synthetase family. HisZ subfamily. Heteromultimer composed of HisG and HisZ subunits.

It localises to the cytoplasm. The protein operates within amino-acid biosynthesis; L-histidine biosynthesis; L-histidine from 5-phospho-alpha-D-ribose 1-diphosphate: step 1/9. Functionally, required for the first step of histidine biosynthesis. May allow the feedback regulation of ATP phosphoribosyltransferase activity by histidine. The polypeptide is ATP phosphoribosyltransferase regulatory subunit (Bacillus mycoides (strain KBAB4) (Bacillus weihenstephanensis)).